A 201-amino-acid polypeptide reads, in one-letter code: Small ribosomal subunit protein uS4 (201 aa).

The S4 RNA-binding domain maps to threonine 91–glutamate 155.

This sequence belongs to the universal ribosomal protein uS4 family. As to quaternary structure, part of the 30S ribosomal subunit. Contacts protein S5. The interaction surface between S4 and S5 is involved in control of translational fidelity.

Its function is as follows. One of the primary rRNA binding proteins, it binds directly to 16S rRNA where it nucleates assembly of the body of the 30S subunit. In terms of biological role, with S5 and S12 plays an important role in translational accuracy. This Nocardia farcinica (strain IFM 10152) protein is Small ribosomal subunit protein uS4.